The sequence spans 657 residues: SAGA complex subunit SGF73 (657 aa).

Zn(2+)-binding residues include Cys78, Cys81, His93, and Cys98. Disordered stretches follow at residues 98–225 (CAGA…TEKH), 287–353 (EKRA…VNLT), 469–532 (QQQQ…SQDT), and 572–636 (ESNQ…NVSG). Positions 107 to 118 (TDPRDESTRETI) are enriched in basic and acidic residues. The segment covering 131 to 163 (DDDNSNDNNNDDDDDDDNDDNEDDDDADDDDDN) has biased composition (acidic residues). 2 stretches are compositionally biased toward polar residues: residues 174–193 (SSFNPLKRSTSMESANTPNM) and 200–210 (TGTPQTFSSSI). Residues 220–286 (NPTEKHLIDF…EHQTKIGAAA (67 aa)) enclose the SCA7 domain. The segment covering 306–321 (QKKHTQQQKQGQRSKQ) has biased composition (basic residues). Low complexity-rich tracts occupy residues 325–336 (NGGKSAKNGGKS) and 469–493 (QQQQQQQQHHSPQAQAQASTQQPTQ). Polar residues predominate over residues 504–516 (ATNSSFNANVSSK). Residues 517-526 (QIQQQQQQQQ) are compositionally biased toward low complexity. Residues 572–583 (ESNQDSHLSGTH) are compositionally biased toward polar residues. Low complexity predominate over residues 584–594 (NNNSSKNGNNN). The segment covering 600-636 (ASISSPNTSVNSIQSPPSVNSVNGSGQGVSTGINVSG) has biased composition (polar residues).

It belongs to the ataxin-7 family. Component of the 1.8 MDa SAGA (Spt-Ada-Gcn5 acetyltransferase) complex, which is composed of 19 subunits TRA1, SPT7, TAF5, NGG1/ADA3, SGF73, SPT20/ADA5, SPT8, TAF12, TAF6, HFI1/ADA1, UBP8, GCN5, ADA2, SPT3, SGF29, TAF10, TAF9, SGF11 and SUS1. The SAGA complex is composed of 4 modules, namely the HAT (histone acetyltransferase) module (GCN5, ADA2, NGG1/ADA3 and SGF29), the DUB (deubiquitinating) module (UBP8, SGF11, SGF73 and SUS1), the core or TAF (TBP-associated factor) module (TAF5, TAF6, TAF9, TAF10 and TAF12), and the Tra1 or SPT (Suppressor of Ty) module (TRA1, HFI1/ADA1, SPT3, SPT7, SPT8 and SPT20/ADA5). The Tra1/SPT module binds activators, the core module recruits TBP (TATA-binding protein), the HAT module contains the histone H3 acetyltransferase GCN5, and the DUB module comprises the histone H2B deubiquitinase UBP8. Also identified in an altered form of SAGA, named SALSA (SAGA altered, Spt8 absent) or SLIK (SAGA-like) complex, which contains a C-terminal truncated form of SPT7 and is missing SPT8. However, it has been shown that the SAGA and SAGA-like SALSA/SLIK transcriptional coactivators are structurally and biochemically equivalent.

The protein resides in the nucleus. The protein localises to the cytoplasm. Functionally, component of the transcription coactivator SAGA complex. SAGA acts as a general cofactor required for essentially all RNA polymerase II transcription. At the promoters, SAGA is required for transcription pre-initiation complex (PIC) recruitment. It influences RNA polymerase II transcriptional activity through different activities such as TBP interaction (via core/TAF module) and promoter selectivity, interaction with transcription activators (via Tra1/SPT module), and chromatin modification through histone acetylation (via HAT module) and deubiquitination (via DUB module). SAGA preferentially acetylates histones H3 (to form H3K9ac, H3K14ac, H3K18ac and H3K23ac) and H2B and deubiquitinates histone H2B. SAGA interacts with DNA via upstream activating sequences (UASs). Also identified in a modified version of SAGA named SALSA or SLIK. The cleavage of SPT7 and the absence of the SPT8 subunit in SLIK neither drive any major conformational differences in its structure compared with SAGA, nor significantly affect HAT, DUB, or DNA-binding activities. SGF73 tethers the DUB module to the rest of the SAGA complex through its central domain and activates the ubiquitin hydrolase UBP8 by maintaining its catalytic domain in an active conformation. SGF73 mediates recruitment of the TREX-2 mRNA export factors SAC3 and THP1 to SAGA, which is crucial to target TREX-2 to the nuclear pore complex (NPC) necessary for export of mRNA. Upon environmental stress, involved in the bypass of the canonical mRNA export process for the immediate export of stress-related transcripts to maintain proteostasis. This chain is SAGA complex subunit SGF73 (SGF73), found in Saccharomyces cerevisiae (strain ATCC 204508 / S288c) (Baker's yeast).